The following is a 130-amino-acid chain: MRLFTGIVFCSLVMGVTSESWRSFFKEALQGVGDMGRAYWDIMISNHQNSNRYLYARGNYDAAQRGPGGVWAAKLISRSRVYLQGLIDCYLFGNSSTVLEDSKSNEKAEEWGRSGKDPDRFRPDGLPKKY.

Positions 1 to 18 (MRLFTGIVFCSLVMGVTS) are cleaved as a signal peptide. Residue Asn-94 is glycosylated (N-linked (GlcNAc...) asparagine; partial). The disordered stretch occupies residues 101-130 (DSKSNEKAEEWGRSGKDPDRFRPDGLPKKY).

This sequence belongs to the SAA family. Apolipoprotein of the HDL complex. As to expression, expressed by the liver; secreted in plasma.

Its subcellular location is the secreted. Its function is as follows. Major acute phase reactant. The polypeptide is Serum amyloid A-4 protein (Homo sapiens (Human)).